Consider the following 123-residue polypeptide: Small ribosomal subunit protein uS12c (123 aa).

It belongs to the universal ribosomal protein uS12 family. As to quaternary structure, part of the 30S ribosomal subunit.

It is found in the plastid. Its subcellular location is the chloroplast. With S4 and S5 plays an important role in translational accuracy. Located at the interface of the 30S and 50S subunits. The sequence is that of Small ribosomal subunit protein uS12c (rps12) from Chlorella vulgaris (Green alga).